Here is a 237-residue protein sequence, read N- to C-terminus: Large ribosomal subunit protein uL1 (237 aa).

Belongs to the universal ribosomal protein uL1 family. In terms of assembly, part of the 50S ribosomal subunit.

Binds directly to 23S rRNA. The L1 stalk is quite mobile in the ribosome, and is involved in E site tRNA release. In terms of biological role, protein L1 is also a translational repressor protein, it controls the translation of the L11 operon by binding to its mRNA. The sequence is that of Large ribosomal subunit protein uL1 from Rickettsia typhi (strain ATCC VR-144 / Wilmington).